A 963-amino-acid polypeptide reads, in one-letter code: MAAAVAAWPWALFCLAAVPPLLSPGAAGLSCCYHAKDNLMCRDVCEQILSSKSDSRLKHLLQRAPEYCPESMGEVWGCINSSLPGVLKKSDGWVGLGCCELAIAVECRQACKQASSKNDILKVCRKEYENALFSCINRNEMGSICCSYAGHHTNCREYCQAIFRTDSSPGPSQIKAVENYCASISPQLIHCVNNYTQSYPMRNPTDSLYCCDRAEDYACQTACKRILMSMKTELEIVDGLIEGCKTMPLPQDPLWQCFLESSRSVHPGVTVHPPPSTGLDGAKLHCCSKANSSTCRELCTKLYSTSWGSSQSWQEFDRFCEYNAVEVSMLTCLADVREPCQLGCRNLSYCTNFNNRPTELFRSCNSQSDQGAMNDMKLWEKGSIKMPFINIPVLDINKCQPEMWKAIACSLQIKPCHSKSRGSIICKSDCVEILKKCGDHNKFPEGHTAESICELLSPTDDLENCIPLDTYLSPSSLGNIVEDVTHPCNPNPCAANQLCEVNRKGCQSGELCLPYLCVPGCKLGEASDFIVRQGTLIQVPSSAGDVGCYKICTCGHTGLLENCVEMHCVDLQKSCIVGGQKKSHGTSFNIDCNVCSCFAGNLICSTRQCLTEHSSEDERQKFTGLPCNCVDQFVPVCGQNGRTYPSACIARCVGLQDNQFEFGSCISKDPCNPNPCSKNQRCIPKKQVCLTSFGKFECSQHECVPRQLNCDQTQDPVCDTDSVEYSNVCTLYQKGKNLAYRGPCQPFCKSVEPVCGHNGETYSSVCAAYSDRVAVDYYGHCQAVGVLSDYGFHTECAFVKCPQLSATGCKPVIAPGACCPLCAGMLRILYDKDKLDNFARVTNKKPITVLDILEKLRLHVSVPQCDVFGYLSIESEIVILIIPVDQKPKPLQIEACNKEAEKIESLINSDSPTLASHVPLSALIASQVQVSFSISSPSVKVGPVLHCLFISFSFTLLKLMDYI.

The first 28 residues, 1–28 (MAAAVAAWPWALFCLAAVPPLLSPGAAG), serve as a signal peptide directing secretion. The Knot 1 repeat unit spans residues 31–78 (CCYHAKDNLMCRDVCEQILSSKSDSRLKHLLQRAPEYCPESMGEVWGC). Residues 31–332 (CCYHAKDNLM…NAVEVSMLTC (302 aa)) form a 5 X Knot repeats region. N-linked (GlcNAc...) asparagine glycosylation occurs at asparagine 80. Knot repeat units follow at residues 98–135 (CCELAIAVECRQACKQASSKNDILKVCRKEYENALFSC) and 145–191 (CCSY…LIHC). The N-linked (GlcNAc...) asparagine glycan is linked to asparagine 194. 2 Knot repeats span residues 210-257 (CCDR…LWQC) and 286-332 (CCSK…MLTC). N-linked (GlcNAc...) asparagine glycans are attached at residues asparagine 291 and asparagine 346. Kazal-like domains lie at 621–667 (KFTG…SCIS), 692–746 (SFGK…PCQP), and 749–783 (KSVEPVCGHNGETYSSVCAAYSDRVAVDYYGHCQA). Intrachain disulfides connect cysteine 627–cysteine 652, cysteine 629–cysteine 648, cysteine 637–cysteine 665, cysteine 710–cysteine 729, cysteine 718–cysteine 744, and cysteine 755–cysteine 781. The GPI-anchor amidated serine moiety is linked to residue serine 936. The propeptide occupies 937-963 (PSVKVGPVLHCLFISFSFTLLKLMDYI).

Belongs to the RECK family. As to quaternary structure, interacts (via knot repeats) with WNT7A (via disordered linker region); the interaction is direct. Interacts (via knot repeats) with WNT7B (via disordered linker region); the interaction is direct. Interacts with ADGRA2; the interaction is direct. In terms of processing, localizes to the plasma membrane via its GPI-anchor. Released from the plasma membrane following cleavage of the GPI-anchor by GDPD5/GPE2.

Its subcellular location is the cell membrane. Functions together with ADGRA2 to enable brain endothelial cells to selectively respond to Wnt7 signals (WNT7A or WNT7B). Plays a key role in Wnt7-specific responses: required for central nervous system (CNS) angiogenesis and blood-brain barrier regulation. Acts as a Wnt7-specific coactivator of canonical Wnt signaling by decoding Wnt ligands: acts by interacting specifically with the disordered linker region of Wnt7, thereby conferring ligand selectivity for Wnt7. ADGRA2 is then required to deliver RECK-bound Wnt7 to frizzled by assembling a higher-order RECK-ADGRA2-Fzd-LRP5-LRP6 complex. Also acts as a serine protease inhibitor. In Gallus gallus (Chicken), this protein is Reversion-inducing cysteine-rich protein with Kazal motifs.